A 216-amino-acid chain; its full sequence is Large ribosomal subunit protein uL3 (216 aa).

Disordered stretches follow at residues 89–108 and 139–158; these read QRASDEEMPETGGSIDVGGF and NTHGNSKSHRVPGSIGQCQS. An N5-methylglutamine modification is found at Gln157.

This sequence belongs to the universal ribosomal protein uL3 family. Part of the 50S ribosomal subunit. Forms a cluster with proteins L14 and L19. Post-translationally, methylated by PrmB.

In terms of biological role, one of the primary rRNA binding proteins, it binds directly near the 3'-end of the 23S rRNA, where it nucleates assembly of the 50S subunit. This Halorhodospira halophila (strain DSM 244 / SL1) (Ectothiorhodospira halophila (strain DSM 244 / SL1)) protein is Large ribosomal subunit protein uL3.